Reading from the N-terminus, the 265-residue chain is 4-hydroxy-tetrahydrodipicolinate reductase (265 aa).

Residues 7 to 12 (GASGRM), Asp33, 96 to 98 (GTT), and 120 to 123 (AANM) each bind NAD(+). The active-site Proton donor/acceptor is the His153. His154 contacts (S)-2,3,4,5-tetrahydrodipicolinate. Lys157 serves as the catalytic Proton donor. Residue 163-164 (GT) coordinates (S)-2,3,4,5-tetrahydrodipicolinate.

It belongs to the DapB family.

The protein resides in the cytoplasm. The catalysed reaction is (S)-2,3,4,5-tetrahydrodipicolinate + NAD(+) + H2O = (2S,4S)-4-hydroxy-2,3,4,5-tetrahydrodipicolinate + NADH + H(+). The enzyme catalyses (S)-2,3,4,5-tetrahydrodipicolinate + NADP(+) + H2O = (2S,4S)-4-hydroxy-2,3,4,5-tetrahydrodipicolinate + NADPH + H(+). It functions in the pathway amino-acid biosynthesis; L-lysine biosynthesis via DAP pathway; (S)-tetrahydrodipicolinate from L-aspartate: step 4/4. Catalyzes the conversion of 4-hydroxy-tetrahydrodipicolinate (HTPA) to tetrahydrodipicolinate. The sequence is that of 4-hydroxy-tetrahydrodipicolinate reductase from Cupriavidus pinatubonensis (strain JMP 134 / LMG 1197) (Cupriavidus necator (strain JMP 134)).